Here is a 213-residue protein sequence, read N- to C-terminus: MPGRGSLEDDPFDFLFKIILIGDSNVGKTCVVHRFQSGIFMDNQQNTIGVDFTVRSLNINGKKVKVQVWDTAGQERFRTITQSYYRSAHGAIIAYDITRRQSFESVPHWIYEAGKYGAANLMLMLMGNKSDLAEKRQILFEEACTLAEKHGLLAVLETSAKESHNVDEVFLLMAKELIARNTFHYHNESPRNSFILDSKPVLAPPEPDKSCLC.

Ser-24, Val-26, Gly-27, Lys-28, Thr-29, Cys-30, Asp-42, and Thr-47 together coordinate GTP. Thr-29 is a binding site for Mg(2+). The Switch 1 motif lies at 37–52 (SGIFMDNQQNTIGVDF). Positions 47 and 70 each coordinate Mg(2+). The Switch 2 signature appears at 72–87 (AGQERFRTITQSYYRS). 7 residues coordinate GTP: Gly-73, Asn-128, Lys-129, Asp-131, Ser-159, Ala-160, and Lys-161. 2 S-geranylgeranyl cysteine lipidation sites follow: Cys-211 and Cys-213. Cys-213 bears the Cysteine methyl ester mark.

It belongs to the small GTPase superfamily. Rab family. The cofactor is Mg(2+).

It is found in the cell membrane. The enzyme catalyses GTP + H2O = GDP + phosphate + H(+). Its activity is regulated as follows. Regulated by guanine nucleotide exchange factors (GEFs) which promote the exchange of bound GDP for free GTP. Regulated by GTPase activating proteins (GAPs) which increase the GTP hydrolysis activity. Inhibited by GDP dissociation inhibitors (GDIs). Functionally, the small GTPases Rab are key regulators of intracellular membrane trafficking, from the formation of transport vesicles to their fusion with membranes. Rabs cycle between an inactive GDP-bound form and an active GTP-bound form that is able to recruit to membranes different set of downstream effectors directly responsible for vesicle formation, movement, tethering and fusion. The chain is Ras-related protein Rab-19 (rab19) from Xenopus laevis (African clawed frog).